Here is a 555-residue protein sequence, read N- to C-terminus: Energy-dependent translational throttle protein EttA (555 aa).

2 ABC transporter domains span residues 6–259 (YTMH…AQEA) and 324–550 (LEVS…RIKY). Position 39–46 (39–46 (GLNGAGKS)) interacts with ATP. Residues 95–139 (SEVVNALKRLDEVYALYADPDADFDKLAAEQGRLEEIIQAHDGHN) are arm. A ptIM region spans residues 242-322 (GNYSSWLEQK…IPPGPRLGDK (81 aa)). Residue 356-363 (GPNGAGKS) coordinates ATP.

This sequence belongs to the ABC transporter superfamily. ABCF family. Translational throttle EttA subfamily. Monomer. Probably contacts ribosomal proteins L1, L5, L33 and S7, the 16S and 23S rRNA and the P-site containing tRNA(fMet).

It is found in the cytoplasm. It carries out the reaction ATP + H2O = ADP + phosphate + H(+). In terms of biological role, a translation factor that gates the progression of the 70S ribosomal initiation complex (IC, containing tRNA(fMet) in the P-site) into the translation elongation cycle by using a mechanism sensitive to the ATP/ADP ratio. Binds to the 70S ribosome E-site where it modulates the state of the translating ribosome during subunit translocation. ATP hydrolysis probably frees it from the ribosome, which can enter the elongation phase. The protein is Energy-dependent translational throttle protein EttA of Escherichia coli O6:H1 (strain CFT073 / ATCC 700928 / UPEC).